Consider the following 280-residue polypeptide: Keratin, type I cytoskeletal 47 kDa (280 aa).

Residues 1-81 (MSFRSSSSYS…SSSFSSFGGN (81 aa)) are head. The tract at residues 82–117 (DKQTMQNLNDRLASYLEKVRALEAANADLELKIREW) is coil 1A. In terms of domain architecture, IF rod spans 82-280 (DKQTMQNLND…RDAELWFNQK (199 aa)). The linker 1 stretch occupies residues 118 to 139 (YEKQKGSGIGAASKDFSKYFEI). Residues 140–231 (ISDLRNKILF…KNHEEEMSIA (92 aa)) form a coil 1B region. The linker 12 stretch occupies residues 232–254 (KGSAAGQVTVEMDAAPGVDLNKI). Positions 255 to 280 (LSDMRADYETLAEKNRRDAELWFNQK) are coil 2.

Belongs to the intermediate filament family. As to quaternary structure, heterotetramer of two type I and two type II keratins.

The polypeptide is Keratin, type I cytoskeletal 47 kDa (xk81b1) (Xenopus laevis (African clawed frog)).